A 216-amino-acid chain; its full sequence is Adenylate kinase (216 aa).

An ATP-binding site is contributed by 10-15 (GAGKGT). The segment at 30–59 (STGDIFRKNISENTPLGIEAKSYMDNGQLV) is NMP. AMP contacts are provided by residues Thr-31, Arg-36, 57–59 (QLV), 85–88 (GFPR), and Gln-92. Positions 126–163 (GRRVCPSCGASYHIKFNPPTNDGKCDLCGSDVIQRKDD) are LID. Arg-127 is an ATP binding site. Zn(2+) contacts are provided by Cys-130 and Cys-133. 136–137 (SY) serves as a coordination point for ATP. Cys-150 and Cys-153 together coordinate Zn(2+). AMP is bound by residues Arg-160 and Arg-171. Position 199 (Gln-199) interacts with ATP.

This sequence belongs to the adenylate kinase family. As to quaternary structure, monomer.

It is found in the cytoplasm. The enzyme catalyses AMP + ATP = 2 ADP. It functions in the pathway purine metabolism; AMP biosynthesis via salvage pathway; AMP from ADP: step 1/1. Functionally, catalyzes the reversible transfer of the terminal phosphate group between ATP and AMP. Plays an important role in cellular energy homeostasis and in adenine nucleotide metabolism. The protein is Adenylate kinase of Clostridium perfringens (strain ATCC 13124 / DSM 756 / JCM 1290 / NCIMB 6125 / NCTC 8237 / Type A).